Reading from the N-terminus, the 371-residue chain is Alanine racemase (371 aa).

Lys-40 functions as the Proton acceptor; specific for D-alanine in the catalytic mechanism. Lys-40 bears the N6-(pyridoxal phosphate)lysine mark. Substrate is bound at residue Arg-138. Tyr-267 acts as the Proton acceptor; specific for L-alanine in catalysis. Met-314 serves as a coordination point for substrate.

Belongs to the alanine racemase family. Pyridoxal 5'-phosphate is required as a cofactor.

It carries out the reaction L-alanine = D-alanine. Its pathway is amino-acid biosynthesis; D-alanine biosynthesis; D-alanine from L-alanine: step 1/1. In terms of biological role, catalyzes the interconversion of L-alanine and D-alanine. May also act on other amino acids. This chain is Alanine racemase (alr), found in Ligilactobacillus salivarius (strain UCC118) (Lactobacillus salivarius).